The sequence spans 1116 residues: Eukaryotic translation initiation factor 2-alpha kinase 3 (1116 aa).

Residues 1–29 (MERAISPGLLVRALLLLLLLLGLAARTVA) form the signal peptide. At 30–514 (AGRARGLPAP…HYNKNIRKKD (485 aa)) the chain is on the lumenal side. Positions 77–101 (ALPAAAGEQEPRGPEPDDETELRPR) are disordered. A glycan (N-linked (GlcNAc...) asparagine) is linked at Asn-258. A helical transmembrane segment spans residues 515–535 (PVLLLHWWKEIVATILFCIIA). Residues 536–1116 (TTFIVRRLFH…NNSHSPLPSN (581 aa)) are Cytoplasmic-facing. Positions 550–571 (RQRKESETQCQTENKYDSVSGE) are disordered. In terms of domain architecture, Protein kinase spans 593–1077 (FEPIQCLGRG…AINIIENAVF (485 aa)). 599 to 607 (LGRGGFGVV) lines the ATP pocket. Tyr-619 carries the phosphotyrosine; by autocatalysis modification. An ATP-binding site is contributed by Lys-622. The tract at residues 647–888 (EHPGIVRYFN…SPKVYLYIQM (242 aa)) is insert loop. Residue Ser-715 is modified to Phosphoserine. The residue at position 802 (Thr-802) is a Phosphothreonine. The segment at 841 to 863 (KPTSSKSSSEATLSISPPRPTTL) is disordered. Low complexity predominate over residues 844-856 (SSKSSSEATLSIS). The Proton acceptor role is filled by Asp-937. Thr-982 is subject to Phosphothreonine. Residues 1090 to 1116 (QRSRSLSSSGTKHSRQSNNSHSPLPSN) form a disordered region. Ser-1094 bears the Phosphoserine mark. Positions 1105–1116 (QSNNSHSPLPSN) are enriched in polar residues.

The protein belongs to the protein kinase superfamily. Ser/Thr protein kinase family. GCN2 subfamily. In terms of assembly, forms dimers with HSPA5/BIP in resting cells. Homotetramerizes in response to endoplasmic reticulum (ER) stress, leading to its activation. Interacts with HSP90B1/GRP94. Interacts with DNAJC3; inhibiting EIF2AK3/PERK activity. Interacts with ATAD3A; ATAD3A and EIF2S1/eIF-2-alpha occupy a common binding site within the cytoplasmic loop of EIF2AK3/PERK, leading to prevent EIF2AK3/PERK association with its substrate EIF2S1/eIF-2-alpha. Interacts with MFN2. Interacts with TMEM33. Interacts with PDIA6. Interacts with LACC1. Post-translationally, oligomerization of the N-terminal ER luminal domain by ER stress promotes EIF2AK3/PERK trans-autophosphorylation of the C-terminal cytoplasmic kinase domain at multiple residues including Thr-982 on the kinase activation loop. Autophosphorylated at Tyr-619 following endoplasmic reticulum stress, leading to activate its activity. Dephosphorylated at Tyr-619 by PTPN1/PTP1B, leading to inactivate its enzyme activity. Phosphorylation at Thr-802 by AKT (AKT1, AKT2 and/or AKT3) inactivates EIF2AK3/PERK. In terms of processing, ADP-ribosylated by PARP16 upon ER stress, which increases kinase activity. In terms of tissue distribution, ubiquitous. A high level expression is seen in secretory tissues.

The protein resides in the endoplasmic reticulum membrane. The catalysed reaction is L-seryl-[protein] + ATP = O-phospho-L-seryl-[protein] + ADP + H(+). It carries out the reaction L-threonyl-[protein] + ATP = O-phospho-L-threonyl-[protein] + ADP + H(+). It catalyses the reaction L-tyrosyl-[protein] + ATP = O-phospho-L-tyrosyl-[protein] + ADP + H(+). Its activity is regulated as follows. Inhibited by HSPA5/BIP in absence of stress. Perturbation in protein folding in the endoplasmic reticulum (ER) promotes reversible dissociation from HSPA5/BIP and oligomerization, resulting in trans-autophosphorylation and kinase activity induction. Inactivated following phosphorylation at Thr-802 by AKT (AKT1, AKT2 and/or AKT3). Inhibited by ATAD3A at mitochondria-endoplasmic reticulum contact sites, providing a safe haven for mitochondrial protein translation during ER stress. Its function is as follows. Metabolic-stress sensing protein kinase that phosphorylates the alpha subunit of eukaryotic translation initiation factor 2 (EIF2S1/eIF-2-alpha) in response to various stress, such as unfolded protein response (UPR). Key effector of the integrated stress response (ISR) to unfolded proteins: EIF2AK3/PERK specifically recognizes and binds misfolded proteins, leading to its activation and EIF2S1/eIF-2-alpha phosphorylation. EIF2S1/eIF-2-alpha phosphorylation in response to stress converts EIF2S1/eIF-2-alpha in a global protein synthesis inhibitor, leading to a global attenuation of cap-dependent translation, while concomitantly initiating the preferential translation of ISR-specific mRNAs, such as the transcriptional activators ATF4 and QRICH1, and hence allowing ATF4- and QRICH1-mediated reprogramming. The EIF2AK3/PERK-mediated unfolded protein response increases mitochondrial oxidative phosphorylation by promoting ATF4-mediated expression of COX7A2L/SCAF1, thereby increasing formation of respiratory chain supercomplexes. In contrast to most subcellular compartments, mitochondria are protected from the EIF2AK3/PERK-mediated unfolded protein response due to EIF2AK3/PERK inhibition by ATAD3A at mitochondria-endoplasmic reticulum contact sites. In addition to EIF2S1/eIF-2-alpha, also phosphorylates NFE2L2/NRF2 in response to stress, promoting release of NFE2L2/NRF2 from the BCR(KEAP1) complex, leading to nuclear accumulation and activation of NFE2L2/NRF2. Serves as a critical effector of unfolded protein response (UPR)-induced G1 growth arrest due to the loss of cyclin-D1 (CCND1). Involved in control of mitochondrial morphology and function. The sequence is that of Eukaryotic translation initiation factor 2-alpha kinase 3 from Homo sapiens (Human).